Consider the following 185-residue polypeptide: Protein GrpE (185 aa).

The tract at residues 1 to 37 is disordered; the sequence is MSEEKQTPEQEAEVEAQEEAVQADTEEVTQDEQSAFQ.

This sequence belongs to the GrpE family. Homodimer.

The protein resides in the cytoplasm. Participates actively in the response to hyperosmotic and heat shock by preventing the aggregation of stress-denatured proteins, in association with DnaK and GrpE. It is the nucleotide exchange factor for DnaK and may function as a thermosensor. Unfolded proteins bind initially to DnaJ; upon interaction with the DnaJ-bound protein, DnaK hydrolyzes its bound ATP, resulting in the formation of a stable complex. GrpE releases ADP from DnaK; ATP binding to DnaK triggers the release of the substrate protein, thus completing the reaction cycle. Several rounds of ATP-dependent interactions between DnaJ, DnaK and GrpE are required for fully efficient folding. The protein is Protein GrpE of Bacillus pumilus (strain SAFR-032).